Consider the following 439-residue polypeptide: MLDKTKQIWFIGIKGTGMASLALILHDLGYKVAGSDIDKYTFTQDPLEAAGIEVASFSKDNIKESGQVIVKGNAFKSDNIEVAACEEKGVKWQSYPDTVEEIVQQYTSIGVAGSHGKTSTTGLLATVLGEAAPTSFLIGDGMGKGVKDSRFFVYEADEYRRHFLAYHPDYQIMTNVDFDHPDYFKDRDDYASAFQTAADQTKKGLFVWGDDERLQKIHPKTAKKYTYGLKDSDDFQAFDVVKTTEGAKFHVRANGEDLGEFTIHLFGDHNVMNATAVIAIAFTEGIDLDVVRKGLVKYTGAKRRFSEKDFGDTVVIDDYAHHPTELRATIQAARQKFPDRKLVTIFQPHTYSRTKEFEEEYVEILKGVDKAFLTPIYGSAREAAGDIKSEDIASQIPGAEVIDFDNLKDLLAYKGDCIVFMGAGDIPKYEVAFEEMLGK.

Residue 113-119 (GSHGKTS) coordinates ATP.

Belongs to the MurCDEF family.

The protein localises to the cytoplasm. It catalyses the reaction UDP-N-acetyl-alpha-D-muramate + L-alanine + ATP = UDP-N-acetyl-alpha-D-muramoyl-L-alanine + ADP + phosphate + H(+). The protein operates within cell wall biogenesis; peptidoglycan biosynthesis. Cell wall formation. This is UDP-N-acetylmuramate--L-alanine ligase from Lactobacillus delbrueckii subsp. bulgaricus (strain ATCC 11842 / DSM 20081 / BCRC 10696 / JCM 1002 / NBRC 13953 / NCIMB 11778 / NCTC 12712 / WDCM 00102 / Lb 14).